The chain runs to 156 residues: Small ribosomal subunit protein uS7 (156 aa).

Belongs to the universal ribosomal protein uS7 family. In terms of assembly, part of the 30S ribosomal subunit. Contacts proteins S9 and S11.

In terms of biological role, one of the primary rRNA binding proteins, it binds directly to 16S rRNA where it nucleates assembly of the head domain of the 30S subunit. Is located at the subunit interface close to the decoding center, probably blocks exit of the E-site tRNA. This is Small ribosomal subunit protein uS7 from Nitrosomonas europaea (strain ATCC 19718 / CIP 103999 / KCTC 2705 / NBRC 14298).